A 634-amino-acid polypeptide reads, in one-letter code: TATA box-binding protein-associated factor RNA polymerase I subunit B (634 aa).

The RRN7-type zinc-finger motif lies at 19–51; that stretch reads LVCEYCGHGSEYAEDDADDGFFTCRQCSAIHTS. 4 residues coordinate Zn(2+): C21, C24, C42, and C45. Positions 51 to 80 are B-reader; sequence STQNTATNPFDFPMTPAHLSAHRRPTQPTP. The interval 54-107 is disordered; that stretch reads NTATNPFDFPMTPAHLSAHRRPTQPTPTPKPFPAPRGAATGAAAPDFDDLGEPS. A compositionally biased stretch (pro residues) spans 77-87; it reads QPTPTPKPFPA. The tract at residues 81-83 is B-linker; it reads TPK. The tract at residues 84–281 is N-terminal cyclin fold; that stretch reads PFPAPRGAAT…DKLLGSSLND (198 aa). The segment covering 88–98 has biased composition (low complexity); it reads PRGAATGAAAP. The segment at 282–284 is C-terminal cyclin fold; it reads CPL.

Belongs to the RRN7/TAF1B family.

It localises to the nucleus. It is found in the nucleolus. In terms of biological role, component of RNA polymerase I core factor complex that acts as a GTF2B/TFIIB-like factor and plays a key role in multiple steps during transcription initiation such as pre-initiation complex (PIC) assembly and postpolymerase recruitment events in polymerase I (Pol I) transcription. Binds rDNA promoters and plays a role in Pol I recruitment. The protein is TATA box-binding protein-associated factor RNA polymerase I subunit B of Oryza sativa subsp. japonica (Rice).